Reading from the N-terminus, the 355-residue chain is Green-sensitive opsin-1 (355 aa).

Over 1–49 the chain is Extracellular; the sequence is MAAHADEPVFAARRYNEETTRESAFVYTNANNTRDPFEGPNYHIAPRWV. The N-linked (GlcNAc...) asparagine glycan is linked to Asn31. Residues 50-74 traverse the membrane as a helical segment; sequence YNLASLWMIIVVIASIFTNSLVIVA. Topologically, residues 75 to 86 are cytoplasmic; it reads TAKFKKLRHPLN. The chain crosses the membrane as a helical span at residues 87-112; sequence WILVNLAIADLGETVLASTISVFNQV. The Extracellular portion of the chain corresponds to 113–126; that stretch reads FGYFVLGHPMCIFE. An intrachain disulfide couples Cys123 to Cys200. The helical transmembrane segment at 127-146 threads the bilayer; sequence GWTVSVCGITALWSLTIISW. Topologically, residues 147–165 are cytoplasmic; sequence ERWVVVCKPFGNVKFDGKW. Residues 166 to 189 traverse the membrane as a helical segment; sequence AAGGIIFAWTWAIIWCTPPIFGWS. The Extracellular portion of the chain corresponds to 190–215; the sequence is RYWPHGLKTSCGPDVFSGSEDPGVAS. Residues 216 to 243 traverse the membrane as a helical segment; the sequence is YMVTLLLTCCILPLSVIIICYIFVWNAI. Over 244–265 the chain is Cytoplasmic; sequence HQVAQQQKDSESTQKAEKEVSR. Residues 266–289 form a helical membrane-spanning segment; it reads MVVVMILAFILCWGPYASFATFSA. Residues 290–297 lie on the Extracellular side of the membrane; it reads LNPGYAWH. A helical transmembrane segment spans residues 298–322; that stretch reads PLAAALPAYFAKSATIYNPIIYVFM. Position 309 is an N6-(retinylidene)lysine (Lys309). The Cytoplasmic portion of the chain corresponds to 323-355; the sequence is NRQFRSCIMQLFGKKVEDASEVSGSTTEVSTAS.

Belongs to the G-protein coupled receptor 1 family. Opsin subfamily. The color pigments are found in the cone photoreceptor cells.

The protein localises to the membrane. Visual pigments are the light-absorbing molecules that mediate vision. They consist of an apoprotein, opsin, covalently linked to cis-retinal. The sequence is that of Green-sensitive opsin-1 (G103) from Psalidodon fasciatus (Banded astyanax).